Here is a 590-residue protein sequence, read N- to C-terminus: Glutathione S-transferase T3 (590 aa).

Residues 1–82 (MKLKVYADRM…YLSSAYPSVV (82 aa)) form the GST N-terminal domain. Residues 11-12 (SQ), 40-41 (QL), 53-54 (KV), and 66-67 (ES) contribute to the glutathione site. The GST C-terminal domain maps to 89–232 (DLSKRARIHS…KDRCQKQREM (144 aa)). Positions 265-336 (DRRKHRRKWS…HCKQRWSKLN (72 aa)) constitute a Myb-like domain. The tract at residues 402–427 (SKGGGSSKRTKLNNGDRVYSSSSNPE) is disordered.

This sequence belongs to the GST superfamily. Theta family.

It is found in the nucleus. It carries out the reaction RX + glutathione = an S-substituted glutathione + a halide anion + H(+). May be involved in the conjugation of reduced glutathione to a wide number of exogenous and endogenous hydrophobic electrophiles and have a detoxification role against certain herbicides. The sequence is that of Glutathione S-transferase T3 (GSTT3) from Arabidopsis thaliana (Mouse-ear cress).